A 215-amino-acid chain; its full sequence is Probable phosphoglycerate mutase GpmB (215 aa).

Substrate is bound by residues 8–15 (RHGETLWN), 21–22 (QG), Arg58, Arg60, 82–85 (ELNM), and 151–152 (GM). His9 serves as the catalytic Tele-phosphohistidine intermediate. Catalysis depends on Glu82, which acts as the Proton donor/acceptor.

This sequence belongs to the phosphoglycerate mutase family. GpmB subfamily.

The enzyme catalyses (2R)-2-phosphoglycerate = (2R)-3-phosphoglycerate. It participates in carbohydrate degradation; glycolysis; pyruvate from D-glyceraldehyde 3-phosphate: step 3/5. The protein is Probable phosphoglycerate mutase GpmB of Erwinia tasmaniensis (strain DSM 17950 / CFBP 7177 / CIP 109463 / NCPPB 4357 / Et1/99).